The primary structure comprises 295 residues: Glutamyl-Q tRNA(Asp) synthetase (295 aa).

L-glutamate contacts are provided by residues R9–T13 and E45. Positions P12–S22 match the 'HIGH' region motif. Zn(2+)-binding residues include C101, C103, Y115, and C119. Y172 and R190 together coordinate L-glutamate. The 'KMSKS' region signature appears at K228 to S232. ATP is bound at residue K231.

The protein belongs to the class-I aminoacyl-tRNA synthetase family. GluQ subfamily. Zn(2+) serves as cofactor.

Catalyzes the tRNA-independent activation of glutamate in presence of ATP and the subsequent transfer of glutamate onto a tRNA(Asp). Glutamate is transferred on the 2-amino-5-(4,5-dihydroxy-2-cyclopenten-1-yl) moiety of the queuosine in the wobble position of the QUC anticodon. The polypeptide is Glutamyl-Q tRNA(Asp) synthetase (Pseudomonas putida (strain W619)).